The chain runs to 76 residues: MSYQQQQCKQPCQPPPVCPPKKCPEPCPHPQCPEPCPPPKCPEPCPEPCPPPSYQQKCPPVQPPPPCQQKCPPKSK.

Tandem repeats lie at residues 21–29, 30–38, and 39–47. The 3 X 9 AA approximate tandem repeats stretch occupies residues 21–47; that stretch reads KKCPEPCPHPQCPEPCPPPKCPEPCPE. Positions 52 to 76 are disordered; it reads PSYQQKCPPVQPPPPCQQKCPPKSK.

The protein belongs to the cornifin (SPRR) family. As to expression, expressed in uterus.

The protein resides in the cytoplasm. Its function is as follows. Cross-linked envelope protein of keratinocytes. It is a keratinocyte protein that first appears in the cell cytosol, but ultimately becomes cross-linked to membrane proteins by transglutaminase. All that results in the formation of an insoluble envelope beneath the plasma membrane. The polypeptide is Small proline-rich protein 2E (Sprr2e) (Mus musculus (Mouse)).